The following is a 23-amino-acid chain: Protein male-specific 40 (23 aa).

As to expression, during early embryogenesis expression is initially detected at the early cleavage stages in the nucleus of two discrete cells. Subsequently, expression is abundant in the cytoplasm of the newly formed pole cells. Male-specific expression during the third larval instar.

It is found in the cytoplasm. The protein localises to the nucleus. The protein is Protein male-specific 40 of Drosophila melanogaster (Fruit fly).